We begin with the raw amino-acid sequence, 359 residues long: Methylthioribose-1-phosphate isomerase (359 aa).

The active-site Proton donor is the D235.

Belongs to the eIF-2B alpha/beta/delta subunits family. MtnA subfamily.

The protein localises to the cytoplasm. Its subcellular location is the nucleus. It catalyses the reaction 5-(methylsulfanyl)-alpha-D-ribose 1-phosphate = 5-(methylsulfanyl)-D-ribulose 1-phosphate. Its pathway is amino-acid biosynthesis; L-methionine biosynthesis via salvage pathway; L-methionine from S-methyl-5-thio-alpha-D-ribose 1-phosphate: step 1/6. Functionally, catalyzes the interconversion of methylthioribose-1-phosphate (MTR-1-P) into methylthioribulose-1-phosphate (MTRu-1-P). The polypeptide is Methylthioribose-1-phosphate isomerase (mri1) (Schizosaccharomyces pombe (strain 972 / ATCC 24843) (Fission yeast)).